Here is a 301-residue protein sequence, read N- to C-terminus: Lipoyl synthase (301 aa).

Residues Cys53, Cys58, Cys64, Cys79, Cys83, Cys86, and Ser290 each coordinate [4Fe-4S] cluster. A Radical SAM core domain is found at 65 to 279 (WSRKTATYML…RIYGKSIGFK (215 aa)).

Belongs to the radical SAM superfamily. Lipoyl synthase family. [4Fe-4S] cluster serves as cofactor.

The protein resides in the cytoplasm. It catalyses the reaction [[Fe-S] cluster scaffold protein carrying a second [4Fe-4S](2+) cluster] + N(6)-octanoyl-L-lysyl-[protein] + 2 oxidized [2Fe-2S]-[ferredoxin] + 2 S-adenosyl-L-methionine + 4 H(+) = [[Fe-S] cluster scaffold protein] + N(6)-[(R)-dihydrolipoyl]-L-lysyl-[protein] + 4 Fe(3+) + 2 hydrogen sulfide + 2 5'-deoxyadenosine + 2 L-methionine + 2 reduced [2Fe-2S]-[ferredoxin]. The protein operates within protein modification; protein lipoylation via endogenous pathway; protein N(6)-(lipoyl)lysine from octanoyl-[acyl-carrier-protein]: step 2/2. Functionally, catalyzes the radical-mediated insertion of two sulfur atoms into the C-6 and C-8 positions of the octanoyl moiety bound to the lipoyl domains of lipoate-dependent enzymes, thereby converting the octanoylated domains into lipoylated derivatives. The sequence is that of Lipoyl synthase from Leptospira interrogans serogroup Icterohaemorrhagiae serovar Lai (strain 56601).